The following is a 179-amino-acid chain: Large ribosomal subunit protein uL5c (179 aa).

Belongs to the universal ribosomal protein uL5 family. As to quaternary structure, part of the 50S ribosomal subunit; contacts the 5S rRNA.

The protein resides in the plastid. The protein localises to the chloroplast. Its function is as follows. Binds 5S rRNA, forms part of the central protuberance of the 50S subunit. The protein is Large ribosomal subunit protein uL5c (rpl5) of Euglena gracilis.